Here is a 251-residue protein sequence, read N- to C-terminus: MNSLQKGSYKVIPGSSFSKNSNGLLSIKYNFIPESVDPSRRGVLEKAQEAYRLRLPSTFDDDRPHIFEGSCQRARNVDCVLIFNAKTKTFTLEHIDEIARLNALRNPKVSKTVPSNAITQSDNSQISESKSTSQSAVTTNSTRRKEKELEASKDGKIKPSSSNTRYPAISSKGPITTDTNDEPDMEVMELDDFAKELELGFDQEFNSIDDPSTVSQTASKPISLRGLSSQERDYASSAQAEGISSASEDED.

Disordered regions lie at residues 110–187 (SKTV…DMEV) and 201–251 (FDQE…EDED). A compositionally biased stretch (polar residues) spans 112 to 123 (TVPSNAITQSDN). Over residues 124–135 (SQISESKSTSQS) the composition is skewed to low complexity. The segment covering 143-157 (RRKEKELEASKDGKI) has biased composition (basic and acidic residues). 2 stretches are compositionally biased toward polar residues: residues 204 to 220 (EFNS…TASK) and 236 to 251 (SSAQ…EDED). A Phosphoserine modification is found at S247.

Belongs to the EAF family. In terms of assembly, forms a stable heterodimer with ell1. Ell1-eaf1 complex interacts with RNA polymerase II.

The protein localises to the nucleus. Its function is as follows. Activates transcription elongation by RNA polymerase II and pyrophosphorolysis as a complex with ell1. Acts as a transcriptional transactivator of ell1 elongation activities. In Schizosaccharomyces pombe (strain 972 / ATCC 24843) (Fission yeast), this protein is Ell1-associated factor 1 (eaf1).